The following is a 132-amino-acid chain: Small ribosomal subunit protein uS8c (132 aa).

The protein belongs to the universal ribosomal protein uS8 family. Part of the 30S ribosomal subunit.

The protein localises to the plastid. It is found in the chloroplast. In terms of biological role, one of the primary rRNA binding proteins, it binds directly to 16S rRNA central domain where it helps coordinate assembly of the platform of the 30S subunit. The polypeptide is Small ribosomal subunit protein uS8c (rps8) (Buxus microphylla (Littleleaf boxwood)).